We begin with the raw amino-acid sequence, 466 residues long: Dihydrolipoyl dehydrogenase 3 (466 aa).

FAD contacts are provided by residues 33–42 (EGRSTLGGTC), Lys-51, and Gly-115. Cys-42 and Cys-47 form a disulfide bridge. NAD(+)-binding positions include 181-185 (GAGVI), Glu-204, Val-238, and 271-274 (AIGR). Asp-313 and Ala-321 together coordinate FAD. His-445 serves as the catalytic Proton acceptor.

It belongs to the class-I pyridine nucleotide-disulfide oxidoreductase family. In terms of assembly, homodimer. Requires FAD as cofactor.

It is found in the cytoplasm. The catalysed reaction is N(6)-[(R)-dihydrolipoyl]-L-lysyl-[protein] + NAD(+) = N(6)-[(R)-lipoyl]-L-lysyl-[protein] + NADH + H(+). LPD-3 may substitute for lipoamide dehydrogenase of the 2-oxoglutarate dehydrogenase and pyruvate multienzyme complexes when the latter is inactive or missing. The sequence is that of Dihydrolipoyl dehydrogenase 3 (lpd3) from Pseudomonas putida (Arthrobacter siderocapsulatus).